Reading from the N-terminus, the 230-residue chain is Ion-translocating oxidoreductase complex subunit E (230 aa).

6 helical membrane-spanning segments follow: residues 11 to 31 (GMWA…LLAV), 39 to 59 (LGLG…VSLV), 69 to 89 (IPVF…LMNA), 93 to 113 (GLYL…IIIG), 132 to 152 (FWMG…REII), and 182 to 202 (SFLL…LIAL).

The protein belongs to the NqrDE/RnfAE family. As to quaternary structure, the complex is composed of six subunits: RnfA, RnfB, RnfC, RnfD, RnfE and RnfG.

The protein localises to the cell inner membrane. Functionally, part of a membrane-bound complex that couples electron transfer with translocation of ions across the membrane. This chain is Ion-translocating oxidoreductase complex subunit E, found in Vibrio atlanticus (strain LGP32) (Vibrio splendidus (strain Mel32)).